A 303-amino-acid polypeptide reads, in one-letter code: Putative CRISPR-associated endonuclease Cas1 2 (303 aa).

Glu-149 is a Mn(2+) binding site.

Belongs to the CRISPR-associated endonuclease Cas1 family. Homodimer, forms a heterotetramer with a Cas2 homodimer. Requires Mg(2+) as cofactor. The cofactor is Mn(2+).

CRISPR (clustered regularly interspaced short palindromic repeat), is an adaptive immune system that provides protection against mobile genetic elements (viruses, transposable elements and conjugative plasmids). CRISPR clusters contain sequences complementary to antecedent mobile elements and target invading nucleic acids. CRISPR clusters are transcribed and processed into CRISPR RNA (crRNA). Acts as a dsDNA endonuclease. Involved in the integration of spacer DNA into the CRISPR cassette. This Methanospirillum hungatei JF-1 (strain ATCC 27890 / DSM 864 / NBRC 100397 / JF-1) protein is Putative CRISPR-associated endonuclease Cas1 2.